Reading from the N-terminus, the 498-residue chain is L-amino acid oxidase Bs29 (498 aa).

Positions 1–3 (SCA) are cleaved as a signal peptide. Cysteine 12 and cysteine 175 form a disulfide bridge. FAD contacts are provided by residues 45–46 (MS), 65–66 (EA), arginine 73, and 89–92 (GPMR). A substrate-binding site is contributed by arginine 92. An N-linked (GlcNAc...) asparagine glycan is attached at asparagine 174. Substrate is bound at residue histidine 225. Valine 263 contributes to the FAD binding site. A disulfide bridge links cysteine 333 with cysteine 414. Tyrosine 374 is a binding site for substrate. Residues glutamate 459 and 466-471 (GWIDST) contribute to the FAD site. Residue 466-467 (GW) participates in substrate binding.

This sequence belongs to the flavin monoamine oxidase family. FIG1 subfamily. In terms of assembly, monomer. This is in contrast with most of its orthologs, that are non-covalently linked homodimers. FAD is required as a cofactor. In terms of tissue distribution, expressed by the venom gland.

The protein resides in the secreted. It catalyses the reaction an L-alpha-amino acid + O2 + H2O = a 2-oxocarboxylate + H2O2 + NH4(+). The catalysed reaction is L-leucine + O2 + H2O = 4-methyl-2-oxopentanoate + H2O2 + NH4(+). Functionally, catalyzes an oxidative deamination of predominantly hydrophobic and aromatic L-amino acids, thus producing hydrogen peroxide that may contribute to the diverse toxic effects of this enzyme. Shows activity on L-Leu. Damage cell membranes of the Gram-positive bacteria S.aureus (MIC=4 ug/ml and MBC=8 ug/ml) and the Gram-negative bacteria A.baumanni (MIC=2 ug/ml and MBC=4 ug/ml). This antibacterial activity is dependent on the production of hydrogen peroxyde, since it is inhibited by catalase, a hydrogen peroxyde scavenger. In Bothriechis schlegelii (Eyelash palm pitviper), this protein is L-amino acid oxidase Bs29.